The chain runs to 193 residues: Imidazoleglycerol-phosphate dehydratase (193 aa).

The protein belongs to the imidazoleglycerol-phosphate dehydratase family.

The protein localises to the cytoplasm. It catalyses the reaction D-erythro-1-(imidazol-4-yl)glycerol 3-phosphate = 3-(imidazol-4-yl)-2-oxopropyl phosphate + H2O. The protein operates within amino-acid biosynthesis; L-histidine biosynthesis; L-histidine from 5-phospho-alpha-D-ribose 1-diphosphate: step 6/9. The protein is Imidazoleglycerol-phosphate dehydratase of Methanoculleus marisnigri (strain ATCC 35101 / DSM 1498 / JR1).